The chain runs to 86 residues: Small ribosomal subunit protein bS20 (86 aa).

A disordered region spans residues 1-25 (MANIKSQMKRIKTNEANRQRNKAVK).

This sequence belongs to the bacterial ribosomal protein bS20 family.

In terms of biological role, binds directly to 16S ribosomal RNA. This Saccharopolyspora erythraea (strain ATCC 11635 / DSM 40517 / JCM 4748 / NBRC 13426 / NCIMB 8594 / NRRL 2338) protein is Small ribosomal subunit protein bS20.